The primary structure comprises 464 residues: Trigger factor (464 aa).

One can recognise a PPIase FKBP-type domain in the interval 169-256 (GDVAIVDYRG…MKELKAKELP (88 aa)).

This sequence belongs to the FKBP-type PPIase family. Tig subfamily.

It is found in the cytoplasm. The catalysed reaction is [protein]-peptidylproline (omega=180) = [protein]-peptidylproline (omega=0). Its function is as follows. Involved in protein export. Acts as a chaperone by maintaining the newly synthesized protein in an open conformation. Functions as a peptidyl-prolyl cis-trans isomerase. The chain is Trigger factor from Microcystis aeruginosa (strain NIES-843 / IAM M-2473).